A 643-amino-acid polypeptide reads, in one-letter code: MEKSSSCESLGAQLPAARLPSEDSLSSASTSHSENSVHTKSASAISSDSISTSADNFSPDLRVLREANKLAEMEEPALLPGENIKDMAKDVTYICPFTGAVRGTLTVTSYRLYFKSMERDPPFVLDASLGVISRVEKIGGASSRGENSYGLETVCKDIRNLRFAHKPEGRTRRSIFENLMKYAFPVSNGLPLFAFEYKEVFPENGWKLYDPLLEYRRQGIPNESWRITKINERYELCDTYPALLVVPANIPDEELKRVASFRSRGRIPVLSWIHPESQATVTRCSQPMVGVSGKRSKEDEKYLQAIMDSNAQSHKIFIFDARPSVNAVANKAKGGGYESEDAYQNAELVFLDIHNIHVMRESLRKLKEIVYPTIEETHWLSNLESTHWLEHIKLILAGALRIADKVESGKTSVVVHCSDGWDRTAQLTSLAMLMLDGYYRTIRGFEVLVEKEWLSFGHRFQLRVGHGDKNHADADRSPVFLQFIDCVWQMTRQFPTAFEFNEYFLITILDHLYSCLFGTFLCNSEQQRGKENLPKKTVSLWSYINSQLEDFTNPLYGSYSNHVLYPVASMRHLELWVGYYIRWNPRMKPQEPIHSRYKELLAKRAELQRKVEELQREISNRSTSSSERASSPAQCVTPVQTVV.

The segment at 1–52 (MEKSSSCESLGAQLPAARLPSEDSLSSASTSHSENSVHTKSASAISSDSIST) is disordered. Phosphoserine is present on residues S6 and S9. The segment covering 23–40 (DSLSSASTSHSENSVHTK) has biased composition (polar residues). A compositionally biased stretch (low complexity) spans 41–52 (SASAISSDSIST). S58 bears the Phosphoserine mark. Residues 68–139 (NKLAEMEEPA…GVISRVEKIG (72 aa)) enclose the GRAM domain. Residues 205-580 (GWKLYDPLLE…RHLELWVGYY (376 aa)) enclose the Myotubularin phosphatase domain. Residues N330, N355, and I356 each contribute to the a 1,2-diacyl-sn-glycero-3-phospho-(1D-myo-inositol-3,5-bisphosphate) site. Residues N330, N355, and I356 each contribute to the a 1,2-diacyl-sn-glycero-3-phospho-(1D-myo-inositol-3-phosphate) site. Residue C417 is the Phosphocysteine intermediate of the active site. A 1,2-diacyl-sn-glycero-3-phospho-(1D-myo-inositol-3,5-bisphosphate) is bound by residues S418, D419, G420, W421, D422, R423, R459, and R463. A 1,2-diacyl-sn-glycero-3-phospho-(1D-myo-inositol-3-phosphate) is bound by residues S418, D419, G420, W421, D422, and R423. A 1,2-diacyl-sn-glycero-3-phospho-(1D-myo-inositol-3-phosphate) is bound at residue R463. Residues 593-627 (IHSRYKELLAKRAELQRKVEELQREISNRSTSSSE) adopt a coiled-coil conformation. The interval 614–643 (LQREISNRSTSSSERASSPAQCVTPVQTVV) is disordered. Low complexity predominate over residues 620–631 (NRSTSSSERASS). The span at 632–643 (PAQCVTPVQTVV) shows a compositional bias: polar residues.

The protein belongs to the protein-tyrosine phosphatase family. Non-receptor class myotubularin subfamily. In terms of assembly, homodimer (via coiled-coil domain). Heterotetramer consisting of one MTMR2 dimer and one SBF2/MTMR13 dimer; specifically in peripheral nerves stabilizes SBF2/MTMR13 at the membranes and increases MTMR2 catalytic activity towards phosphatidylinositol 3,5-bisphosphate and to a lesser extent towards phosphatidylinositol 3-phosphate. Heterodimer with SBF1/MTMR5; acts as an adapter for the phosphatase MTMR2 to regulate MTMR2 catalytic activity and subcellular location. Heterodimer with MTMR12. Post-translationally, phosphorylation at Ser-58 decreases MTMR2 localization to endocytic vesicular structures. Expressed in sciatic nerve and in Schwann cells (at protein level). Detected in adult dorsal root ganglia, neurons of the central nervous system, motor neurons, cell soma and neurites of sensory neurons, olfactory bulb, cerebellum and hippocampus.

Its subcellular location is the cytoplasm. It localises to the early endosome membrane. The protein resides in the perinuclear region. It is found in the cell projection. The protein localises to the axon. Its subcellular location is the endosome membrane. The catalysed reaction is a 1,2-diacyl-sn-glycero-3-phospho-(1D-myo-inositol-3,5-bisphosphate) + H2O = a 1,2-diacyl-sn-glycero-3-phospho-(1D-myo-inositol-5-phosphate) + phosphate. The enzyme catalyses a 1,2-diacyl-sn-glycero-3-phospho-(1D-myo-inositol-3-phosphate) + H2O = a 1,2-diacyl-sn-glycero-3-phospho-(1D-myo-inositol) + phosphate. It carries out the reaction 1,2-dioctanoyl-sn-glycero-3-phospho-(1-D-myo-inositol-3-phosphate) + H2O = 1,2-dioctanoyl-sn-glycero-3-phospho-(1D-myo-inositol) + phosphate. It catalyses the reaction 1,2-dioctanoyl-sn-glycero-3-phospho-(1D-myo-inositol-3,5-bisphosphate) + H2O = 1,2-dioctanoyl-sn-glycero-3-phospho-(1D-myo-inositol-5-phosphate) + phosphate. In terms of biological role, lipid phosphatase that specifically dephosphorylates the D-3 position of phosphatidylinositol 3-phosphate and phosphatidylinositol 3,5-bisphosphate, generating phosphatidylinositol and phosphatidylinositol 5-phosphate. Regulates the level of these phosphoinositides critical for various biological processes including autophagy initiation and autophagosome maturation. The protein is Phosphatidylinositol-3,5-bisphosphate 3-phosphatase MTMR2 of Mus musculus (Mouse).